The primary structure comprises 116 residues: Large ribosomal subunit protein uL14m (116 aa).

This sequence belongs to the universal ribosomal protein uL14 family.

The protein localises to the mitochondrion. In Acanthamoeba polyphaga (Amoeba), this protein is Large ribosomal subunit protein uL14m (RPL14).